Here is a 330-residue protein sequence, read N- to C-terminus: Glycerol-3-phosphate dehydrogenase [NAD(P)+] (330 aa).

4 residues coordinate NADPH: Ser-10, Trp-11, Arg-31, and Lys-104. Lys-104, Gly-131, and Ser-133 together coordinate sn-glycerol 3-phosphate. Residue Ala-135 participates in NADPH binding. 5 residues coordinate sn-glycerol 3-phosphate: Lys-186, Asp-239, Ser-249, Arg-250, and Asn-251. Residue Lys-186 is the Proton acceptor of the active site. Residue Arg-250 participates in NADPH binding. The NADPH site is built by Val-274 and Glu-276.

This sequence belongs to the NAD-dependent glycerol-3-phosphate dehydrogenase family.

The protein localises to the cytoplasm. The catalysed reaction is sn-glycerol 3-phosphate + NAD(+) = dihydroxyacetone phosphate + NADH + H(+). The enzyme catalyses sn-glycerol 3-phosphate + NADP(+) = dihydroxyacetone phosphate + NADPH + H(+). It participates in membrane lipid metabolism; glycerophospholipid metabolism. Its function is as follows. Catalyzes the reduction of the glycolytic intermediate dihydroxyacetone phosphate (DHAP) to sn-glycerol 3-phosphate (G3P), the key precursor for phospholipid synthesis. In Thermoanaerobacter sp. (strain X514), this protein is Glycerol-3-phosphate dehydrogenase [NAD(P)+].